A 1050-amino-acid chain; its full sequence is Antibiotic efflux pump membrane transporter ArpB (1050 aa).

The next 12 helical transmembrane spans lie at 10–30 (IFAW…ILKL), 339–359 (GVIH…YLFL), 370–390 (MTVP…GFSI), 393–413 (LTMF…IVVV), 440–460 (GALV…AFFG), 472–492 (ITIV…TPAL), 539–559 (VPFL…FARI), 871–891 (MPAL…ALYE), 893–913 (WSIP…ALIA), 923–943 (VYFL…AILI), 972–992 (IIMT…ASGA), and 1004–1024 (VIGG…LFFV).

The protein belongs to the resistance-nodulation-cell division (RND) (TC 2.A.6) family.

It localises to the cell inner membrane. In terms of biological role, the inner membrane transporter component of an antibiotic efflux pump. Confers resistance to numerous structurally unrelated antibiotics such as carbenicillin, chloramphenicol, erythromycin, novobiocin, streptomycin and tetracycline. Is not involved in organic solvent efflux. The protein is Antibiotic efflux pump membrane transporter ArpB (arpB) of Pseudomonas putida (Arthrobacter siderocapsulatus).